A 195-amino-acid chain; its full sequence is VAPTGSVETEKAGPSYKPKEYYKVTEAILRLLLLASLVVAVVVMVTSKETELISVKLDPFPPFMLPLTAKFTQSPAFIYFVAGLSVAGLYTIISTLASFYNLLIKPGFCPALVSHFIILDVVMLGIVGTATGAAGGVAYIGLKGNSHVGWTKVCNKYGKLCTHLGASLAVSFFAFIVLLLLIILSIHSLSKKIPK.

Over 1–26 (VAPTGSVETEKAGPSYKPKEYYKVTE) the chain is Cytoplasmic. A helical transmembrane segment spans residues 27–47 (AILRLLLLASLVVAVVVMVTS). Over 48-75 (KETELISVKLDPFPPFMLPLTAKFTQSP) the chain is Extracellular. Residues 76–96 (AFIYFVAGLSVAGLYTIISTL) form a helical membrane-spanning segment. Residues 97–120 (ASFYNLLIKPGFCPALVSHFIILD) lie on the Cytoplasmic side of the membrane. Residues 121 to 143 (VVMLGIVGTATGAAGGVAYIGLK) form a helical membrane-spanning segment. Topologically, residues 144 to 163 (GNSHVGWTKVCNKYGKLCTH) are extracellular. A helical membrane pass occupies residues 164 to 184 (LGASLAVSFFAFIVLLLLIIL). Topologically, residues 185 to 195 (SIHSLSKKIPK) are cytoplasmic.

Belongs to the Casparian strip membrane proteins (CASP) family. In terms of assembly, homodimer and heterodimers.

The protein resides in the cell membrane. The polypeptide is CASP-like protein IN26 (IN26) (Ipomoea nil (Japanese morning glory)).